Reading from the N-terminus, the 99-residue chain is Integration host factor subunit alpha (99 aa).

It belongs to the bacterial histone-like protein family. In terms of assembly, heterodimer of an alpha and a beta chain.

Its function is as follows. This protein is one of the two subunits of integration host factor, a specific DNA-binding protein that functions in genetic recombination as well as in transcriptional and translational control. The sequence is that of Integration host factor subunit alpha (ihfA) from Xylella fastidiosa (strain 9a5c).